Here is a 709-residue protein sequence, read N- to C-terminus: Molybdenum cofactor sulfurase (709 aa).

N6-(pyridoxal phosphate)lysine is present on Lys208. Cys367 is a catalytic residue. Residues Asp563–Ser707 form the MOSC domain.

This sequence belongs to the class-V pyridoxal-phosphate-dependent aminotransferase family. MOCOS subfamily. Pyridoxal 5'-phosphate serves as cofactor.

It carries out the reaction Mo-molybdopterin + L-cysteine + AH2 = thio-Mo-molybdopterin + L-alanine + A + H2O. It functions in the pathway cofactor biosynthesis; molybdopterin biosynthesis. Functionally, sulfurates the molybdenum cofactor. Sulfation of molybdenum is essential for xanthine dehydrogenase (XDH) and aldehyde oxidase (ADO) enzymes in which molybdenum cofactor is liganded by 1 oxygen and 1 sulfur atom in active form. The chain is Molybdenum cofactor sulfurase from Caenorhabditis elegans.